The primary structure comprises 911 residues: Protein translocase subunit SecA (911 aa).

ATP contacts are provided by residues glutamine 87, glycine 105–threonine 109, and aspartate 499. Cysteine 895, cysteine 897, cysteine 906, and histidine 907 together coordinate Zn(2+).

It belongs to the SecA family. Monomer and homodimer. Part of the essential Sec protein translocation apparatus which comprises SecA, SecYEG and auxiliary proteins SecDF-YajC and YidC. Zn(2+) is required as a cofactor.

It is found in the cell inner membrane. The protein localises to the cytoplasm. It catalyses the reaction ATP + H2O + cellular proteinSide 1 = ADP + phosphate + cellular proteinSide 2.. Part of the Sec protein translocase complex. Interacts with the SecYEG preprotein conducting channel. Has a central role in coupling the hydrolysis of ATP to the transfer of proteins into and across the cell membrane, serving both as a receptor for the preprotein-SecB complex and as an ATP-driven molecular motor driving the stepwise translocation of polypeptide chains across the membrane. This is Protein translocase subunit SecA from Novosphingobium aromaticivorans (strain ATCC 700278 / DSM 12444 / CCUG 56034 / CIP 105152 / NBRC 16084 / F199).